Consider the following 149-residue polypeptide: Large ribosomal subunit protein bL9 (149 aa).

The protein belongs to the bacterial ribosomal protein bL9 family.

Its function is as follows. Binds to the 23S rRNA. The chain is Large ribosomal subunit protein bL9 from Xanthomonas oryzae pv. oryzae (strain MAFF 311018).